The sequence spans 112 residues: MAM and fibronectin type III domain-containing protein 2 (112 aa).

In terms of tissue distribution, component of the acid-insoluble and acid-soluble organic matrix of the aragonitic skeleton (at protein level).

Its subcellular location is the secreted. The polypeptide is MAM and fibronectin type III domain-containing protein 2 (Acropora millepora (Staghorn coral)).